The following is a 247-amino-acid chain: tRNA pseudouridine synthase A (247 aa).

The active-site Nucleophile is the D52. Position 113 (Y113) interacts with substrate.

This sequence belongs to the tRNA pseudouridine synthase TruA family. In terms of assembly, homodimer.

It carries out the reaction uridine(38/39/40) in tRNA = pseudouridine(38/39/40) in tRNA. Its function is as follows. Formation of pseudouridine at positions 38, 39 and 40 in the anticodon stem and loop of transfer RNAs. In Sinorhizobium medicae (strain WSM419) (Ensifer medicae), this protein is tRNA pseudouridine synthase A.